Reading from the N-terminus, the 300-residue chain is Energy-coupling factor transporter ATP-binding protein EcfA2 (300 aa).

Residues 3–258 (IKAKNIVKIY…NKFLIENKML (256 aa)) form the ABC transporter domain. Position 40-47 (40-47 (GQTGSGKT)) interacts with ATP.

It belongs to the ABC transporter superfamily. Energy-coupling factor EcfA family. In terms of assembly, forms a stable energy-coupling factor (ECF) transporter complex composed of 2 membrane-embedded substrate-binding proteins (S component), 2 ATP-binding proteins (A component) and 2 transmembrane proteins (T component).

It localises to the cell membrane. Functionally, ATP-binding (A) component of a common energy-coupling factor (ECF) ABC-transporter complex. Unlike classic ABC transporters this ECF transporter provides the energy necessary to transport a number of different substrates. This is Energy-coupling factor transporter ATP-binding protein EcfA2 from Mesomycoplasma hyopneumoniae (strain 232) (Mycoplasma hyopneumoniae).